The chain runs to 136 residues: Protein PsiE homolog (136 aa).

4 helical membrane-spanning segments follow: residues Ile15–Leu35, Tyr55–Val75, Phe82–Ile102, and Pro108–Cys128.

Belongs to the PsiE family.

The protein localises to the cell inner membrane. In Enterobacter sp. (strain 638), this protein is Protein PsiE homolog.